We begin with the raw amino-acid sequence, 93 residues long: Toxin RelE1 (93 aa).

This sequence belongs to the RelE toxin family.

In terms of biological role, toxic component of a type II toxin-antitoxin (TA) system. Its toxic effect is neutralized by coexpression with cognate antitoxin RelB1 but no other ParD or RelB antitoxin. The polypeptide is Toxin RelE1 (relE1) (Caulobacter vibrioides (strain ATCC 19089 / CIP 103742 / CB 15) (Caulobacter crescentus)).